We begin with the raw amino-acid sequence, 172 residues long: Pre-intermoult gene 1 protein (172 aa).

The signal sequence occupies residues 1-22; the sequence is MKLTKLWLLFVCLGLFVTLVVS. Positions 25 to 45 are enriched in acidic residues; the sequence is TDSDADSDSSADSDSSADSDE. Positions 25–172 are disordered; sequence TDSDADSDSS…RRNNNSRRRG (148 aa). 3 consecutive repeat copies span residues 27 to 32, 33 to 38, and 39 to 44. The segment at 27 to 44 is 3 X 6 AA tandem repeats of S-S-A-D-S-D; it reads SDADSDSSADSDSSADSD. The span at 55–77 shows a compositional bias: low complexity; the sequence is TSTTESSATNSSGSSDDASGSSS. Residues 78 to 95 are compositionally biased toward acidic residues; that stretch reads DVDDGSDDDTDSGSDTDY. The span at 104–172 shows a compositional bias: basic residues; that stretch reads VKKRANRKKA…RRNNNSRRRG (69 aa).

Low expression in first to third instar larvae salivary glands.

This chain is Pre-intermoult gene 1 protein (Pig1), found in Drosophila melanogaster (Fruit fly).